The following is a 244-amino-acid chain: 3-deoxy-manno-octulosonate cytidylyltransferase (244 aa).

This sequence belongs to the KdsB family.

It localises to the cytoplasm. The catalysed reaction is 3-deoxy-alpha-D-manno-oct-2-ulosonate + CTP = CMP-3-deoxy-beta-D-manno-octulosonate + diphosphate. The protein operates within nucleotide-sugar biosynthesis; CMP-3-deoxy-D-manno-octulosonate biosynthesis; CMP-3-deoxy-D-manno-octulosonate from 3-deoxy-D-manno-octulosonate and CTP: step 1/1. Its pathway is bacterial outer membrane biogenesis; lipopolysaccharide biosynthesis. Its function is as follows. Activates KDO (a required 8-carbon sugar) for incorporation into bacterial lipopolysaccharide in Gram-negative bacteria. In Flavobacterium johnsoniae (strain ATCC 17061 / DSM 2064 / JCM 8514 / BCRC 14874 / CCUG 350202 / NBRC 14942 / NCIMB 11054 / UW101) (Cytophaga johnsonae), this protein is 3-deoxy-manno-octulosonate cytidylyltransferase.